Reading from the N-terminus, the 203-residue chain is NAD(P)H dehydrogenase (quinone) (203 aa).

Residues Ile-3–Val-194 form the Flavodoxin-like domain. FMN-binding positions include Ser-9–Val-14 and Ala-82–Phe-84. Position 11 (Tyr-11) interacts with NAD(+). Residue Trp-102 participates in substrate binding. Residues Ser-117–Gly-123 and His-138 contribute to the FMN site.

The protein belongs to the WrbA family. Requires FMN as cofactor.

The enzyme catalyses a quinone + NADH + H(+) = a quinol + NAD(+). The catalysed reaction is a quinone + NADPH + H(+) = a quinol + NADP(+). The sequence is that of NAD(P)H dehydrogenase (quinone) from Syntrophus aciditrophicus (strain SB).